Consider the following 64-residue polypeptide: MAVPKHRKSKAKKRSRQAANDKRFLGSLSICPQCGAERMPHRICPECGFYKDRVIKAPKTQNAG.

A compositionally biased stretch (basic residues) spans 1–16 (MAVPKHRKSKAKKRSR). The disordered stretch occupies residues 1 to 22 (MAVPKHRKSKAKKRSRQAANDK).

This sequence belongs to the bacterial ribosomal protein bL32 family.

This chain is Large ribosomal subunit protein bL32, found in Brachyspira hyodysenteriae (strain ATCC 49526 / WA1).